The following is a 556-amino-acid chain: Arginine--tRNA ligase (556 aa).

Residues 117 to 127 (PNVAKQMHVGH) carry the 'HIGH' region motif.

The protein belongs to the class-I aminoacyl-tRNA synthetase family. In terms of assembly, monomer.

It localises to the cytoplasm. The enzyme catalyses tRNA(Arg) + L-arginine + ATP = L-arginyl-tRNA(Arg) + AMP + diphosphate. In Cutibacterium acnes (strain DSM 16379 / KPA171202) (Propionibacterium acnes), this protein is Arginine--tRNA ligase.